A 229-amino-acid chain; its full sequence is Ribonuclease T (229 aa).

The Exonuclease domain occupies Val-23–Phe-197. 4 residues coordinate Mg(2+): Asp-26, Glu-28, His-184, and Asp-189. The Proton donor/acceptor role is filled by His-184.

It belongs to the RNase T family. Homodimer. It depends on Mg(2+) as a cofactor.

Trims short 3' overhangs of a variety of RNA species, leaving a one or two nucleotide 3' overhang. Responsible for the end-turnover of tRNA: specifically removes the terminal AMP residue from uncharged tRNA (tRNA-C-C-A). Also appears to be involved in tRNA biosynthesis. The sequence is that of Ribonuclease T from Haemophilus influenzae (strain PittGG).